Reading from the N-terminus, the 674-residue chain is MLRGDSAAKIQERYAELQKRKSHPTSCISTAFTNVATLCRKRYQMMHPELGLAHSCNEAFLPLMAFCGRHRDYNSPEESQRELLFHERLKSALDKLTFRPCSEEQRASYQKLDALTELYRDPQFQQINNFMTDFKKWLDGGFSTAVEGDAKAIRLEPFQKNLLIHVIFFIAVTKIPVLANRVLQYLIHAFQIDFLSQTSIDIFKQKATVFLVPRRHGKTWFIIPIISFLLKHMIGISIGYVAHQKHVSQFVLKEVEFRCRHTFARDYVVENKDNVISIDHRGAKSTALFASCYNTNSIRGQNFHLLLVDEAHFIKKEAFNTILGFLAQNTTKIIFISSTNTTSDSTCFLTRLNNAPFDMLNVVSYVCEEHLHSFTEKGDATACPCYRLHKPTFISLNSQVRKTANMFMPGAFMDEIIGGTNKISQNTVLITDQSREEFDILRYSTLNTNAYDYFGKTLYVYLDPAFTTNRKASGTGVAAVGAYRHQFLIYGLEHFFLRDLSESSEVAIAECAAHMIISVLSLHPYLDELRIAVEGNTNQAAAVRIACLIRQSVQSSTLIRVLFYHTPDQNHIEQPFYLMGRDKALAVEQFISRFNSGYIKASQELVSYTIKLSHDPIEYLLEQIQNLHRVTLAEGTTARYSAKRQNRISDDLIIAVIMATYLCDDIHAIRFRVS.

Residues 212–219 carry the Walker A motif motif; it reads VPRRHGKT. Residues 305–310 carry the Walker B motif motif; it reads LLLVDE. E310 functions as the For ATPase activity in the catalytic mechanism. Active-site for nuclease activity residues include D463 and E534. Positions 580 to 600 are required for interaction with UL56 and DNA packaging; it reads GRDKALAVEQFISRFNSGYIK. D651 serves as the catalytic For nuclease activity.

It belongs to the herpesviridae TRM3 protein family. In terms of assembly, interacts with the terminase subunits TRM1 and TRM2. Interacts with portal protein.

Its subcellular location is the host nucleus. In terms of biological role, component of the molecular motor that translocates viral genomic DNA in empty capsid during DNA packaging. Forms a tripartite terminase complex together with TRM1 and TRM2 in the host cytoplasm. Once the complex reaches the host nucleus, it interacts with the capsid portal vertex. This portal forms a ring in which genomic DNA is translocated into the capsid. TRM3 carries an RNase H-like nuclease activity that plays an important role for the cleavage of concatemeric viral DNA into unit length genomes. The protein is Tripartite terminase subunit 3 of Homo sapiens (Human).